The following is an 837-amino-acid chain: Protein translocase subunit SecA (837 aa).

ATP is bound by residues Q85, 103–107 (GEGKT), and D493. The Zn(2+) site is built by C821, C823, C832, and H833.

It belongs to the SecA family. As to quaternary structure, monomer and homodimer. Part of the essential Sec protein translocation apparatus which comprises SecA, SecYEG and auxiliary proteins SecDF. Other proteins may also be involved. The cofactor is Zn(2+).

The protein resides in the cell membrane. It is found in the cytoplasm. The enzyme catalyses ATP + H2O + cellular proteinSide 1 = ADP + phosphate + cellular proteinSide 2.. In terms of biological role, part of the Sec protein translocase complex. Interacts with the SecYEG preprotein conducting channel. Has a central role in coupling the hydrolysis of ATP to the transfer of proteins into and across the cell membrane, serving as an ATP-driven molecular motor driving the stepwise translocation of polypeptide chains across the membrane. The polypeptide is Protein translocase subunit SecA (Streptococcus pneumoniae (strain Taiwan19F-14)).